The following is a 152-amino-acid chain: Nucleoside diphosphate kinase (152 aa).

Residues Lys11, Phe59, Arg87, Thr93, Arg104, and Asn114 each coordinate ATP. His117 serves as the catalytic Pros-phosphohistidine intermediate.

Belongs to the NDK family. As to quaternary structure, homotetramer. It depends on Mg(2+) as a cofactor.

The protein localises to the cytoplasm. The enzyme catalyses dZDP + ATP = dZTP + ADP. It catalyses the reaction a 2'-deoxyribonucleoside 5'-diphosphate + ATP = a 2'-deoxyribonucleoside 5'-triphosphate + ADP. It carries out the reaction a ribonucleoside 5'-diphosphate + ATP = a ribonucleoside 5'-triphosphate + ADP. Its pathway is purine metabolism. Functionally, major role in the synthesis of nucleoside triphosphates other than ATP. The ATP gamma phosphate is transferred to the NDP beta phosphate via a ping-pong mechanism, using a phosphorylated active-site intermediate. Its function is as follows. (Microbial infection) Catalyzes the phosphorylation of dZDP to dZTP, when the bacterium is infected by a phage that produces the substrate for the synthesis of dZTP (2- amino-2'-deoxyadenosine 5'-triphosphate), which is then used by the phage as a DNA polymerase substrate. The chain is Nucleoside diphosphate kinase from Synechococcus sp. (strain CC9311).